Consider the following 287-residue polypeptide: Cyclopropane mycolic acid synthase MmaA2 (287 aa).

Residues 33–34 (YS), 72–74 (GCG), 94–99 (TLSKNQ), 123–124 (WE), and I136 contribute to the S-adenosyl-L-methionine site. The active site involves C269.

This sequence belongs to the CFA/CMAS family.

The catalysed reaction is a 1-acyl-2-(9Z)-enoyl-sn-glycero-3-phospholipid + S-adenosyl-L-methionine = a 1-acyl-2-(9-cyclopronane)-acyl-sn-glycero-3-phospholipid + S-adenosyl-L-homocysteine + H(+). The protein operates within lipid metabolism; mycolic acid biosynthesis. In terms of biological role, catalyzes the conversion of a double bond to a cis cyclopropane ring at the distal position of an alpha mycolic acid via the transfer of a methylene group from S-adenosyl-L-methionine. MmaA2 also catalyzes the biosynthesis of the cis-cyclopropanated methoxymycolates. Cyclopropanated mycolic acids are key factors participating in cell envelope permeability, host immunomodulation and persistence. The chain is Cyclopropane mycolic acid synthase MmaA2 (mmaA2) from Mycobacterium tuberculosis (strain ATCC 25177 / H37Ra).